Reading from the N-terminus, the 650-residue chain is Fructose-1,6-bisphosphatase class 3 (650 aa).

It belongs to the FBPase class 3 family. Requires Mn(2+) as cofactor.

The enzyme catalyses beta-D-fructose 1,6-bisphosphate + H2O = beta-D-fructose 6-phosphate + phosphate. The protein operates within carbohydrate biosynthesis; gluconeogenesis. The protein is Fructose-1,6-bisphosphatase class 3 of Finegoldia magna (strain ATCC 29328 / DSM 20472 / WAL 2508) (Peptostreptococcus magnus).